Reading from the N-terminus, the 201-residue chain is ATP-dependent Clp protease proteolytic subunit 2 (201 aa).

The active-site Nucleophile is serine 100. Histidine 125 is an active-site residue.

Belongs to the peptidase S14 family. Fourteen ClpP subunits assemble into 2 heptameric rings which stack back to back to give a disk-like structure with a central cavity, resembling the structure of eukaryotic proteasomes.

It localises to the cytoplasm. The catalysed reaction is Hydrolysis of proteins to small peptides in the presence of ATP and magnesium. alpha-casein is the usual test substrate. In the absence of ATP, only oligopeptides shorter than five residues are hydrolyzed (such as succinyl-Leu-Tyr-|-NHMec, and Leu-Tyr-Leu-|-Tyr-Trp, in which cleavage of the -Tyr-|-Leu- and -Tyr-|-Trp bonds also occurs).. Cleaves peptides in various proteins in a process that requires ATP hydrolysis. Has a chymotrypsin-like activity. Plays a major role in the degradation of misfolded proteins. The protein is ATP-dependent Clp protease proteolytic subunit 2 of Corynebacterium glutamicum (strain ATCC 13032 / DSM 20300 / JCM 1318 / BCRC 11384 / CCUG 27702 / LMG 3730 / NBRC 12168 / NCIMB 10025 / NRRL B-2784 / 534).